Reading from the N-terminus, the 560-residue chain is Oxygen-dependent choline dehydrogenase (560 aa).

8–37 (DYIIIGAGSAGNVLATRLTEDADVSVLLLE) contacts FAD. His475 functions as the Proton acceptor in the catalytic mechanism.

This sequence belongs to the GMC oxidoreductase family. The cofactor is FAD.

The enzyme catalyses choline + A = betaine aldehyde + AH2. It carries out the reaction betaine aldehyde + NAD(+) + H2O = glycine betaine + NADH + 2 H(+). The protein operates within amine and polyamine biosynthesis; betaine biosynthesis via choline pathway; betaine aldehyde from choline (cytochrome c reductase route): step 1/1. Involved in the biosynthesis of the osmoprotectant glycine betaine. Catalyzes the oxidation of choline to betaine aldehyde and betaine aldehyde to glycine betaine at the same rate. This is Oxygen-dependent choline dehydrogenase from Stenotrophomonas maltophilia (strain R551-3).